A 162-amino-acid chain; its full sequence is Interleukin-15 (162 aa).

The first 29 residues, 1–29 (MRISKPYLRSTSIQCYLCLLLNSHFLAEA), serve as a signal peptide directing secretion. The propeptide occupies 30–48 (GIHVFIFGCISAGLPKTEA). Intrachain disulfides connect Cys83-Cys133 and Cys90-Cys136. N-linked (GlcNAc...) asparagine glycans are attached at residues Asn108, Asn119, Asn127, and Asn143.

It belongs to the IL-15/IL-21 family. In terms of tissue distribution, expressed in many tissues including heart, spleen, lung, liver, muscle and kidney (at mRNA level). Expressed in many tissues including heart, spleen, lung, liver, muscle and kidney (at protein level).

The protein localises to the secreted. Cytokine that plays a major role in the development of inflammatory and protective immune responses to microbial invaders and parasites by modulating immune cells of both the innate and adaptive immune systems. Stimulates the proliferation of natural killer cells, T-cells and B-cells and promotes the secretion of several cytokines. In monocytes, induces the production of IL8 and monocyte chemotactic protein 1/CCL2, two chemokines that attract neutrophils and monocytes respectively to sites of infection. Unlike most cytokines, which are secreted in soluble form, IL15 is expressed in association with its high affinity IL15RA on the surface of IL15-producing cells and delivers signals to target cells that express IL2RB and IL2RG receptor subunits. Binding to its receptor triggers the phosphorylation of JAK1 and JAK3 and the recruitment and subsequent phosphorylation of signal transducer and activator of transcription-3/STAT3 and STAT5. In mast cells, induces the rapid tyrosine phosphorylation of STAT6 and thereby controls mast cell survival and release of cytokines such as IL4. The chain is Interleukin-15 (IL15) from Oryctolagus cuniculus (Rabbit).